A 718-amino-acid polypeptide reads, in one-letter code: Tegument protein UL46 (718 aa).

Disordered regions lie at residues 433-510 and 581-611; these read SAGP…EPPA and TADD…DDES. Over residues 444 to 454 the composition is skewed to gly residues; it reads GPGGHRAGGGT. Positions 455 to 467 are enriched in basic and acidic residues; the sequence is CREKIQRARRDNE.

This sequence belongs to the herpesviridae HHV-1 VP11/12 protein family. Interacts with VP16. Interacts with host LCK, PIK3R1, SHC1 AND GRB2; these interactions promote the activation of the PI3K/AKT pathway. Interacts with host YWHAB. Interacts with ICP0; this interaction targets UL46 for degradation by the proteasome. Interacts (via N-terminus) with host TMEM173. Interacts (via C-terminus) with host TBK1. Interacts with host DOK2. Post-translationally, phosphorylated by host LCK. The phosphorylation seems to be lymphocyte-specific.

The protein localises to the virion tegument. The protein resides in the host cytoplasm. Its subcellular location is the host cell membrane. Its function is as follows. Plays a role in the activation of the host PI3K/AKT pathway to promote cell survival. Interacts with and activates host LCK and thereby recruits downstream partners SHC1, GRB2 and PI3KR1 in order to activate the PI3K pathway by phosphorylating host AKT on its activating residues. This mechanism is inhibited by the viral protein US3 that instead promotes incorporation of UL46 into virions. Plays a role in the inhibition of TMEM173/STING-mediated type I interferon production. Interacts with host DOK2 and induces its degradation. This immune evasion mechanism to inactivate T-cells may play an important role during pathogenesis. This chain is Tegument protein UL46, found in Homo sapiens (Human).